The primary structure comprises 454 residues: Probable succinate-semialdehyde dehydrogenase [NADP(+)] (454 aa).

NADP(+) is bound by residues 130-131 (WN), 154-157 (KHAS), and 206-207 (GS). Glu228 functions as the Proton acceptor in the catalytic mechanism. Leu229 contacts NADP(+). Cys262 functions as the Nucleophile in the catalytic mechanism. NADP(+) is bound at residue Glu359.

It belongs to the aldehyde dehydrogenase family.

The enzyme catalyses succinate semialdehyde + NADP(+) + H2O = succinate + NADPH + 2 H(+). It participates in amino-acid degradation; 4-aminobutanoate degradation. Functionally, catalyzes the NADP(+) dependent oxidation of succinate semialdehyde to succinate. The polypeptide is Probable succinate-semialdehyde dehydrogenase [NADP(+)] (gabD) (Synechocystis sp. (strain ATCC 27184 / PCC 6803 / Kazusa)).